Here is a 53-residue protein sequence, read N- to C-terminus: Conotoxin-like peptide 1 (53 aa).

The first 18 residues, 1-18 (MGVKSALFIMAVFAAANV), serve as a signal peptide directing secretion. 3 cysteine pairs are disulfide-bonded: Cys25-Cys39, Cys32-Cys43, and Cys38-Cys50.

Its subcellular location is the secreted. This is Conotoxin-like peptide 1 (CTL-1) from Orgyia pseudotsugata multicapsid polyhedrosis virus (OpMNPV).